Here is a 395-residue protein sequence, read N- to C-terminus: Dual specificity mitogen-activated protein kinase kinase 1 (395 aa).

A disordered region spans residues 1–24; that stretch reads MPKKKPTPIQLNPNPEGTAVNGTP. The span at 9 to 24 shows a compositional bias: polar residues; that stretch reads IQLNPNPEGTAVNGTP. One can recognise a Protein kinase domain in the interval 68–363; sequence FEKVSELGAG…LKQLMVHSFI (296 aa). Residues 74 to 82 and lysine 97 each bind ATP; that span reads LGAGNGGVV. Aspartate 190 acts as the Proton acceptor in catalysis. Serine 218 and serine 222 each carry phosphoserine; by RAF. The tract at residues 284–305 is disordered; the sequence is ASSELAPRPRPPGRPISSYGPD.

This sequence belongs to the protein kinase superfamily. STE Ser/Thr protein kinase family. MAP kinase kinase subfamily. In terms of processing, activated by phosphorylation on Ser/Thr catalyzed by MAP kinase kinase kinases (RAF or MOS). In terms of tissue distribution, expressed in the central nervous system, kidney, liver, intestine and the hematopoietic system.

Its subcellular location is the cytoplasm. It is found in the cytoskeleton. The protein resides in the microtubule organizing center. It localises to the centrosome. The protein localises to the spindle pole body. Its subcellular location is the nucleus. It catalyses the reaction L-seryl-[protein] + ATP = O-phospho-L-seryl-[protein] + ADP + H(+). The catalysed reaction is L-threonyl-[protein] + ATP = O-phospho-L-threonyl-[protein] + ADP + H(+). It carries out the reaction L-tyrosyl-[protein] + ATP = O-phospho-L-tyrosyl-[protein] + ADP + H(+). Its function is as follows. Dual specificity protein kinase which acts as an essential component of the MAP kinase signal transduction pathway. Binding of extracellular ligands such as growth factors, cytokines and hormones to their cell-surface receptors activates the MAPK/ERK cascade, ultimately leading to phosphorylation of a threonine and a tyrosine residue in a Thr-Glu-Tyr sequence located in MAP kinases. Depending on the cellular context, this pathway mediates diverse biological functions such as cell growth, adhesion, survival and differentiation predominantly through the regulation of transcription, metabolism and cytoskeletal rearrangements. The sequence is that of Dual specificity mitogen-activated protein kinase kinase 1 (map2k1) from Xenopus laevis (African clawed frog).